Here is a 311-residue protein sequence, read N- to C-terminus: Aspartate carbamoyltransferase catalytic subunit (311 aa).

The carbamoyl phosphate site is built by arginine 59 and threonine 60. Residue lysine 87 participates in L-aspartate binding. Residues arginine 109, histidine 139, and glutamine 142 each coordinate carbamoyl phosphate. Positions 172 and 224 each coordinate L-aspartate. Carbamoyl phosphate is bound by residues alanine 265 and proline 266.

The protein belongs to the aspartate/ornithine carbamoyltransferase superfamily. ATCase family. As to quaternary structure, heterododecamer (2C3:3R2) of six catalytic PyrB chains organized as two trimers (C3), and six regulatory PyrI chains organized as three dimers (R2).

It carries out the reaction carbamoyl phosphate + L-aspartate = N-carbamoyl-L-aspartate + phosphate + H(+). Its pathway is pyrimidine metabolism; UMP biosynthesis via de novo pathway; (S)-dihydroorotate from bicarbonate: step 2/3. Functionally, catalyzes the condensation of carbamoyl phosphate and aspartate to form carbamoyl aspartate and inorganic phosphate, the committed step in the de novo pyrimidine nucleotide biosynthesis pathway. This Streptococcus pyogenes serotype M4 (strain MGAS10750) protein is Aspartate carbamoyltransferase catalytic subunit.